The primary structure comprises 233 residues: MADS-box transcription factor 56 (233 aa).

In terms of domain architecture, MADS-box spans 1–61 (MVRGRTELKR…GRLYEFASAP (61 aa)). One can recognise a K-box domain in the interval 87 to 177 (IQQVKDDTLG…RGKHRNLEAA (91 aa)).

It localises to the nucleus. In terms of biological role, probable transcription factor. The protein is MADS-box transcription factor 56 (MADS56) of Oryza sativa subsp. japonica (Rice).